The sequence spans 380 residues: Cytochrome b (380 aa).

A run of 4 helical transmembrane segments spans residues 34-54, 78-99, 114-134, and 179-199; these read FGSLLALCLMTQILTGLLLAM, WLIRNMHANGASFFFICIYLHI, WNTGVLLLLTLMATAFVGYVL, and FFALHFLLPFMIAGLTLIHLT. Heme b contacts are provided by histidine 84 and histidine 98. Heme b is bound by residues histidine 183 and histidine 197. Histidine 202 provides a ligand contact to a ubiquinone. The next 4 helical transmembrane spans lie at 227-247, 289-309, 321-341, and 348-368; these read LKDALGLALLLLPLTTMALFS, LGGVLALAASVLVLFLSPLLH, LSQLLFWTLVANLLILTWIGS, and FIIIGQLASTTYFIILLILFP.

The protein belongs to the cytochrome b family. The cytochrome bc1 complex contains 11 subunits: 3 respiratory subunits (MT-CYB, CYC1 and UQCRFS1), 2 core proteins (UQCRC1 and UQCRC2) and 6 low-molecular weight proteins (UQCRH/QCR6, UQCRB/QCR7, UQCRQ/QCR8, UQCR10/QCR9, UQCR11/QCR10 and a cleavage product of UQCRFS1). This cytochrome bc1 complex then forms a dimer. Heme b serves as cofactor.

The protein resides in the mitochondrion inner membrane. Functionally, component of the ubiquinol-cytochrome c reductase complex (complex III or cytochrome b-c1 complex) that is part of the mitochondrial respiratory chain. The b-c1 complex mediates electron transfer from ubiquinol to cytochrome c. Contributes to the generation of a proton gradient across the mitochondrial membrane that is then used for ATP synthesis. The polypeptide is Cytochrome b (MT-CYB) (Oceanodroma tethys (Wedge-rumped storm-petrel)).